The sequence spans 432 residues: Glutamate-1-semialdehyde 2,1-aminomutase (432 aa).

The residue at position 270 (lysine 270) is an N6-(pyridoxal phosphate)lysine.

It belongs to the class-III pyridoxal-phosphate-dependent aminotransferase family. HemL subfamily. As to quaternary structure, homodimer. Pyridoxal 5'-phosphate serves as cofactor.

It localises to the cytoplasm. It catalyses the reaction (S)-4-amino-5-oxopentanoate = 5-aminolevulinate. It functions in the pathway porphyrin-containing compound metabolism; protoporphyrin-IX biosynthesis; 5-aminolevulinate from L-glutamyl-tRNA(Glu): step 2/2. This is Glutamate-1-semialdehyde 2,1-aminomutase from Acinetobacter baylyi (strain ATCC 33305 / BD413 / ADP1).